We begin with the raw amino-acid sequence, 204 residues long: Adenylyl-sulfate kinase (204 aa).

Residue 34–41 participates in ATP binding; that stretch reads GLSGSGKS. Serine 108 (phosphoserine intermediate) is an active-site residue.

Belongs to the APS kinase family.

The enzyme catalyses adenosine 5'-phosphosulfate + ATP = 3'-phosphoadenylyl sulfate + ADP + H(+). It functions in the pathway sulfur metabolism; hydrogen sulfide biosynthesis; sulfite from sulfate: step 2/3. Catalyzes the synthesis of activated sulfate. The polypeptide is Adenylyl-sulfate kinase (Phocaeicola vulgatus (strain ATCC 8482 / DSM 1447 / JCM 5826 / CCUG 4940 / NBRC 14291 / NCTC 11154) (Bacteroides vulgatus)).